Here is a 381-residue protein sequence, read N- to C-terminus: Choline transport ATP-binding protein OpuBA (381 aa).

Residues 2 to 236 (LTLENVSKTY…PADEFVEEFI (235 aa)) form the ABC transporter domain. Position 35–42 (35–42 (GPSGCGKT)) interacts with ATP. CBS domains are found at residues 256-314 (MNTQ…LVSE) and 316-374 (LHED…WGEE).

The protein belongs to the ABC transporter superfamily.

In terms of biological role, involved in a high affinity multicomponent binding-protein-dependent transport system for choline. Probably responsible for energy coupling to the transport system. This chain is Choline transport ATP-binding protein OpuBA (opuBA), found in Bacillus subtilis (strain 168).